Consider the following 100-residue polypeptide: uncharacterized protein (100 aa).

This is an uncharacterized protein from Mycoplasma genitalium (strain ATCC 33530 / DSM 19775 / NCTC 10195 / G37) (Mycoplasmoides genitalium).